Consider the following 146-residue polypeptide: Aspartate carbamoyltransferase regulatory chain (146 aa).

Zn(2+)-binding residues include Cys-102, Cys-107, Cys-131, and Cys-134.

This sequence belongs to the PyrI family. Contains catalytic and regulatory chains. Zn(2+) serves as cofactor.

Functionally, involved in allosteric regulation of aspartate carbamoyltransferase. The polypeptide is Aspartate carbamoyltransferase regulatory chain (Clostridium botulinum (strain Okra / Type B1)).